Reading from the N-terminus, the 189-residue chain is MTEYKLVVVGAGGVGKSALTIQLIQNHFVDEYDPTIEDSYRKQVVIDGETCLLDILDTAGQEEYSAMRDQYMRTGEGFLCVFAINNTKSFEDIHHYREQIKRVKDSEDVPMVLVGNKCDLPSRTVDTKQAQELARSYGIPFIETSAKTRQRVEDAFYTLVREIRQYRLKKISKEEKTPGCVKIKKCVIM.

Methionine 1 bears the N-acetylmethionine mark. An N-acetylthreonine; in GTPase KRas, N-terminally processed modification is found at threonine 2. Residues 10–18, 29–35, and 59–60 contribute to the GTP site; these read GAGGVGKSA, VDEYDPT, and AG. Positions 32 to 40 match the Effector region motif; that stretch reads YDPTIEDSY. Lysine 104 carries the post-translational modification N6-acetyllysine. 116–119 lines the GTP pocket; that stretch reads NKCD. The segment at 166–185 is hypervariable region; it reads YRLKKISKEEKTPGCVKIKK. Lysine 170 is covalently cross-linked (Glycyl lysine isopeptide (Lys-Gly) (interchain with G-Cter in ubiquitin)). The S-palmitoyl cysteine moiety is linked to residue cysteine 180. N6-palmitoyl lysine attachment occurs at residues lysine 182, lysine 184, and lysine 185. Cysteine methyl ester is present on cysteine 186. Cysteine 186 carries the S-farnesyl cysteine lipid modification. Positions 187–189 are cleaved as a propeptide — removed in mature form; it reads VIM.

This sequence belongs to the small GTPase superfamily. Ras family. Interacts with PHLPP. Interacts (active GTP-bound form preferentially) with RGS14. Interacts (when farnesylated) with PDE6D; this promotes dissociation from the cell membrane. Interacts with SOS1. Interacts (when farnesylated) with GPR31. Interacts with RAP1GDS1. Interacts (active GTP-bound form) with both SHOC2 and PP1c (all isoforms) to form a tertiary complex; SHOC2 and PP1c preferably bind M-Ras/MRAS, but they also bind K-Ras/KRAS, N-Ras/NRAS and H-Ras/HRAS. Interacts (GTP-bound form) with MAPKAP1/SIN1; inhibiting K-Ras/KRAS activity. In terms of assembly, interacts (when farnesylated) with GPR31. In terms of processing, acetylation at Lys-104 prevents interaction with guanine nucleotide exchange factors (GEFs). Post-translationally, ubiquitinated by the BCR(LZTR1) E3 ubiquitin ligase complex at Lys-170 in a non-degradative manner, leading to inhibit Ras signaling by decreasing Ras association with membranes. Palmitoylated at Lys-182, Lys-184 and Lys-185. Lysine-depalmitoylation by SIRT2 promotes its localization to endomembranes in endocytic pathways.

It localises to the cell membrane. The protein localises to the endomembrane system. Its subcellular location is the cytoplasm. The protein resides in the cytosol. It catalyses the reaction GTP + H2O = GDP + phosphate + H(+). Its activity is regulated as follows. Alternates between an inactive form bound to GDP and an active form bound to GTP. Activated by a guanine nucleotide-exchange factor (GEF) and inactivated by a GTPase-activating protein (GAP). Interaction with SOS1 promotes exchange of bound GDP to GTP. Ras proteins bind GDP/GTP and possess intrinsic GTPase activity. Plays an important role in the regulation of cell proliferation. Plays a role in promoting oncogenic events by inducing transcriptional silencing of tumor suppressor genes (TSGs) in colorectal cancer (CRC) cells in a ZNF304-dependent manner. In Rattus norvegicus (Rat), this protein is GTPase KRas (Kras).